Here is a 128-residue protein sequence, read N- to C-terminus: Fluoride-specific ion channel FluC (128 aa).

4 consecutive transmembrane segments (helical) span residues 5–25 (IVAI…LSIG), 35–55 (LGTL…VVAF), 67–87 (LFVI…SVEV), and 96–116 (FGWA…LTGL). Na(+) is bound by residues Gly-75 and Thr-78.

It belongs to the fluoride channel Fluc/FEX (TC 1.A.43) family.

It localises to the cell inner membrane. It catalyses the reaction fluoride(in) = fluoride(out). Na(+) is not transported, but it plays an essential structural role and its presence is essential for fluoride channel function. Functionally, fluoride-specific ion channel. Important for reducing fluoride concentration in the cell, thus reducing its toxicity. The protein is Fluoride-specific ion channel FluC of Burkholderia pseudomallei (strain 1106a).